The chain runs to 650 residues: NAC domain-containing protein 54 (650 aa).

The 151-residue stretch at 6-156 (LPPGFRFHPT…AYALCRVFKK (151 aa)) folds into the NAC domain. A DNA-binding region spans residues 105–162 (VGMKKTLVYYRGRAPHGSRTDWVMHEYRLDERECETDTGLQDAYALCRVFKKTAPGPK).

Expressed in leaves, roots and flowers.

The protein resides in the nucleus. Transcription factor that functions as a regulator of the jasmonate (JA) signaling pathway. May regulate the expression of genes encoding JA biosynthetic enzymes, such as lipoxygenase 7 (CM-LOX1), allene oxide synthase 2 (AOS2) and OPDA reductase 7 (OPR7). Involved in abscisic acid-induced leaf senescence. Activates the abscisic acid (ABA) signaling-associated gene ABI5 and the senescence-associated gene NYC1 by directly binding to the mitochondrial dysfunction motif (MDM) present in their promoters. Possesses transcriptional activator activity in yeast. Required for the multiplication of the rice dwarf virus (RDV). In Oryza sativa subsp. japonica (Rice), this protein is NAC domain-containing protein 54.